Reading from the N-terminus, the 832-residue chain is Protein PPP4R3C (832 aa).

The disordered stretch occupies residues 708–832; it reads RTQEGEAVMP…SPKKKPHLSS (125 aa). Basic and acidic residues-rich tracts occupy residues 725–735 and 749–765; these read FTETKRTHQEG and METK…DSPK. Low complexity predominate over residues 769–779; that stretch reads SGDFKFSSSYS. The span at 801 to 820 shows a compositional bias: acidic residues; that stretch reads PDDEEEKEEDEEEKEEDKED.

The protein belongs to the SMEK family.

This Homo sapiens (Human) protein is Protein PPP4R3C.